The following is a 146-amino-acid chain: UPF0735 ACT domain-containing protein Cphy_3604 (146 aa).

Residues 70-145 enclose the ACT domain; it reads TFMLQMDDIP…GIHYLKILGR (76 aa).

The protein belongs to the UPF0735 family.

The chain is UPF0735 ACT domain-containing protein Cphy_3604 from Lachnoclostridium phytofermentans (strain ATCC 700394 / DSM 18823 / ISDg) (Clostridium phytofermentans).